We begin with the raw amino-acid sequence, 403 residues long: Palmitoyltransferase ZDHHC23-A (403 aa).

The Cytoplasmic portion of the chain corresponds to 1 to 70 (MKRERFKPPE…ADRLGVSCCT (70 aa)). Residues 71-91 (VGPLRLELSVLPPMVLIPGLL) traverse the membrane as a helical segment. Arg92 is a topological domain (lumenal). Residues 93–113 (VAAINCLLGVIILTALPLLVL) traverse the membrane as a helical segment. The Cytoplasmic segment spans residues 114–125 (WYYYMTHRRKRR). A helical transmembrane segment spans residues 126 to 146 (TLFFLSLALFSLAYMYYLFLT). Residues 147 to 153 (EIVPRGD) are Lumenal-facing. The helical transmembrane segment at 154–174 (VTHLQVVTATTGMMLTLISLV) threads the bilayer. Topologically, residues 175–268 (RTKQGPGFVK…NSCVGQANHR (94 aa)) are cytoplasmic. The DHHC domain maps to 225–275 (KKCPVCQLVRPPRAGHCRICGACVLRMDHHCVWINSCVGQANHRQFILTLL). Cys255 functions as the S-palmitoyl cysteine intermediate in the catalytic mechanism. The chain crosses the membrane as a helical span at residues 269–289 (QFILTLLLFLLTSFYGISLVL). Topologically, residues 290–319 (RSICPKQSLFTAMLYCPGVYNQYSTALCFT) are lumenal. A helical membrane pass occupies residues 320–340 (CVWYSVIITGGLLHLFILQII). Topologically, residues 341 to 403 (NVSCNVTERE…GSSLNLTDMV (63 aa)) are cytoplasmic.

It belongs to the DHHC palmitoyltransferase family.

It is found in the golgi apparatus membrane. Its subcellular location is the golgi apparatus. The protein localises to the trans-Golgi network membrane. The catalysed reaction is L-cysteinyl-[protein] + hexadecanoyl-CoA = S-hexadecanoyl-L-cysteinyl-[protein] + CoA. Its function is as follows. Palmitoyltransferase that could catalyze the addition of palmitate onto various protein substrates and be involved in a variety of cellular processes. This Danio rerio (Zebrafish) protein is Palmitoyltransferase ZDHHC23-A (zdhhc23a).